We begin with the raw amino-acid sequence, 249 residues long: EID1-like F-box protein 2 (249 aa).

One can recognise an F-box domain in the interval 16–68 (HCTKGHLSEEVLFLMVQHLNWNPNVIATLSCVCKWFDDLAKRLLWKEFCRARA).

This Arabidopsis thaliana (Mouse-ear cress) protein is EID1-like F-box protein 2 (EDL2).